The sequence spans 67 residues: Kappa-conotoxin-like 2 (67 aa).

Positions 1–26 (MMFRLTSVSCFLLVIACLNLFQVVLT) are cleaved as a signal peptide. 4 cysteine pairs are disulfide-bonded: C29-C43, C36-C48, C42-C51, and C47-C55. F59 carries the post-translational modification Phenylalanine amide. Residues 63–67 (ATFQE) constitute a propeptide that is removed on maturation.

Belongs to the conotoxin I2 superfamily. As to expression, expressed by the venom duct.

The protein resides in the secreted. In terms of biological role, inhibits the vertebrate voltage-gated potassium channels Kv1.1/KCNA1 and Kv1.3/KCNA3. In Conus vexillum (Flag cone), this protein is Kappa-conotoxin-like 2.